A 565-amino-acid polypeptide reads, in one-letter code: Thiol:disulfide interchange protein DsbD (565 aa).

The N-terminal stretch at 1–19 (MAQRIFTLILLLCSTSVFA) is a signal peptide. 2 disulfides stabilise this stretch: C122–C128 and C182–C304. Transmembrane regions (helical) follow at residues 163 to 183 (LPFS…TPCV), 208 to 228 (LLTF…GLVV), 243 to 263 (YVLI…FGLF), 296 to 316 (IAGL…LLYI), 323 to 343 (WLGG…LMLI), 357 to 377 (WMEQ…VFLL), and 384 to 404 (VWGL…AFIT). A Thioredoxin domain is found at 434–565 (WAFGATHTAQ…FSAHLRDRQP (132 aa)). An intrachain disulfide couples C480 to C483.

Belongs to the thioredoxin family. DsbD subfamily.

The protein resides in the cell inner membrane. The catalysed reaction is [protein]-dithiol + NAD(+) = [protein]-disulfide + NADH + H(+). The enzyme catalyses [protein]-dithiol + NADP(+) = [protein]-disulfide + NADPH + H(+). In terms of biological role, required to facilitate the formation of correct disulfide bonds in some periplasmic proteins and for the assembly of the periplasmic c-type cytochromes. Acts by transferring electrons from cytoplasmic thioredoxin to the periplasm. This transfer involves a cascade of disulfide bond formation and reduction steps. The chain is Thiol:disulfide interchange protein DsbD from Shigella boydii serotype 4 (strain Sb227).